A 182-amino-acid chain; its full sequence is IQ domain-containing protein F1 (182 aa).

Basic and acidic residues-rich tracts occupy residues 1–10 (MGEEQQKPEE) and 31–43 (ETEKAKSKKKQEL). The interval 1 to 43 (MGEEQQKPEELNAPTDDAPQEKQQPADLSSETEKAKSKKKQEL) is disordered. IQ domains lie at 45–74 (EKDQVVKIQAWWRGTLVRRSLLHAALSAWI) and 101–130 (EQWAVVRLQSWIRMWRIRRRYCRLLKAVRT).

In terms of assembly, interacts with calmodulin. In terms of tissue distribution, specifically expressed in testes and mature spermatozoa (at protein level).

The protein resides in the cytoplasmic vesicle. Its subcellular location is the secretory vesicle. The protein localises to the acrosome. Involved in sperm capacitation and acrosome reaction. This is IQ domain-containing protein F1 from Mus musculus (Mouse).